A 367-amino-acid chain; its full sequence is DNA replication and repair protein RecF (367 aa).

An ATP-binding site is contributed by 30–37; it reads GANGSGKT.

It belongs to the RecF family.

The protein localises to the cytoplasm. In terms of biological role, the RecF protein is involved in DNA metabolism; it is required for DNA replication and normal SOS inducibility. RecF binds preferentially to single-stranded, linear DNA. It also seems to bind ATP. The protein is DNA replication and repair protein RecF of Pseudomonas entomophila (strain L48).